A 279-amino-acid chain; its full sequence is ESX-1 secretion-associated protein EspG1 (279 aa).

Belongs to the EspG family. Interacts specifically with ESX-1-dependent PE/PPE proteins.

It is found in the cytoplasm. Its function is as follows. Specific chaperone for cognate PE/PPE proteins. Plays an important role in preventing aggregation of PE/PPE dimers. The sequence is that of ESX-1 secretion-associated protein EspG1 from Mycobacterium marinum (strain ATCC BAA-535 / M).